The primary structure comprises 206 residues: Small ribosomal subunit protein uS4 (206 aa).

Positions 96 to 156 constitute an S4 RNA-binding domain; the sequence is GRLDNVVYRM…EKSKKQARIK (61 aa).

It belongs to the universal ribosomal protein uS4 family. In terms of assembly, part of the 30S ribosomal subunit. Contacts protein S5. The interaction surface between S4 and S5 is involved in control of translational fidelity.

One of the primary rRNA binding proteins, it binds directly to 16S rRNA where it nucleates assembly of the body of the 30S subunit. Its function is as follows. With S5 and S12 plays an important role in translational accuracy. The chain is Small ribosomal subunit protein uS4 from Histophilus somni (strain 129Pt) (Haemophilus somnus).